We begin with the raw amino-acid sequence, 629 residues long: tRNA uridine 5-carboxymethylaminomethyl modification enzyme MnmG (629 aa).

An FAD-binding site is contributed by 13–18 (GGGHAG). 273 to 287 (GPRYCPSIEDKIVRF) provides a ligand contact to NAD(+).

This sequence belongs to the MnmG family. In terms of assembly, homodimer. Heterotetramer of two MnmE and two MnmG subunits. It depends on FAD as a cofactor.

The protein resides in the cytoplasm. Functionally, NAD-binding protein involved in the addition of a carboxymethylaminomethyl (cmnm) group at the wobble position (U34) of certain tRNAs, forming tRNA-cmnm(5)s(2)U34. This is tRNA uridine 5-carboxymethylaminomethyl modification enzyme MnmG from Marinomonas sp. (strain MWYL1).